The primary structure comprises 206 residues: Large ribosomal subunit protein uL4 (206 aa).

The segment at 63–93 (MYKQKGTGRARHHSARAPQFRGGGKAHGPVV) is disordered. Basic residues predominate over residues 64–77 (YKQKGTGRARHHSA).

Belongs to the universal ribosomal protein uL4 family. As to quaternary structure, part of the 50S ribosomal subunit.

Its function is as follows. One of the primary rRNA binding proteins, this protein initially binds near the 5'-end of the 23S rRNA. It is important during the early stages of 50S assembly. It makes multiple contacts with different domains of the 23S rRNA in the assembled 50S subunit and ribosome. Forms part of the polypeptide exit tunnel. The polypeptide is Large ribosomal subunit protein uL4 (Sinorhizobium medicae (strain WSM419) (Ensifer medicae)).